A 221-amino-acid chain; its full sequence is uncharacterized protein (221 aa).

Helical transmembrane passes span 30–50 (FGIFLALSIEFIPAEVVLPLA), 62–82 (AGVVLAGSLGGVAGPLTLYWI), 144–164 (VWVFSLYTFIAMLPITFVYVY), and 179–199 (ILDQYMLPIGIAILALFLLYL).

The protein belongs to the DedA family.

Its subcellular location is the cell membrane. This is an uncharacterized protein from Bacillus subtilis (strain 168).